A 354-amino-acid polypeptide reads, in one-letter code: Arginase (354 aa).

His136, Asp159, His161, and Asp163 together coordinate Mn(2+). Residues Asn165, Ser172, and Asp217 each contribute to the L-arginine site. Residues Asp266 and Asp268 each contribute to the Mn(2+) site.

Belongs to the arginase family. Homotrimer; oligomerization is dependent on Mn(2+) binding. Requires Mn(2+) as cofactor.

The catalysed reaction is L-arginine + H2O = urea + L-ornithine. Its pathway is nitrogen metabolism; urea cycle; L-ornithine and urea from L-arginine: step 1/1. Catalyzes the hydrolysis of L-arginine into urea and L-ornithine, which is a precursor for polyamine biosynthesis. May play a role in parasite intra-hepatic development during the host liver stage. This chain is Arginase, found in Plasmodium berghei (strain Anka).